The sequence spans 117 residues: G antigen 12J (117 aa).

Residues Met1–Cys117 are disordered. Acidic residues-rich tracts occupy residues Phe32–Glu45 and Glu87–Glu96. The segment covering Glu103 to Cys117 has biased composition (basic and acidic residues).

This sequence belongs to the GAGE family.

The polypeptide is G antigen 12J (GAGE12J) (Homo sapiens (Human)).